The following is a 547-amino-acid chain: Serine/threonine-protein kinase pkn3 (547 aa).

The Protein kinase domain occupies tyrosine 18 to valine 288. Residues isoleucine 24–valine 32 and lysine 47 each bind ATP. The active-site Proton acceptor is the aspartate 142. The segment covering lysine 290–proline 299 has biased composition (basic and acidic residues). A disordered region spans residues lysine 290–alanine 327.

This sequence belongs to the protein kinase superfamily. Ser/Thr protein kinase family.

The enzyme catalyses L-seryl-[protein] + ATP = O-phospho-L-seryl-[protein] + ADP + H(+). It carries out the reaction L-threonyl-[protein] + ATP = O-phospho-L-threonyl-[protein] + ADP + H(+). The polypeptide is Serine/threonine-protein kinase pkn3 (pkn3) (Myxococcus xanthus).